The sequence spans 313 residues: Protein FixB (313 aa).

FAD is bound at residue 255-283 (LYLAVGISGQIQHMVGANASQTIFAINKD).

The protein belongs to the ETF alpha-subunit/FixB family. In terms of assembly, heterodimer of FixA and FixB.

It participates in amine and polyamine metabolism; carnitine metabolism. Required for anaerobic carnitine reduction. May bring reductant to CaiA. The sequence is that of Protein FixB from Escherichia coli O81 (strain ED1a).